The sequence spans 470 residues: Ribosomal protein uS12 methylthiotransferase RimO (470 aa).

Positions 33–143 (NKIGFVSLGC…VLEHVHQYAP (111 aa)) constitute an MTTase N-terminal domain. [4Fe-4S] cluster contacts are provided by Cys42, Cys78, Cys107, Cys175, Cys179, and Cys182. A Radical SAM core domain is found at 161–398 (LTPKHYAYLK…MLVQQEISAA (238 aa)). The region spanning 401 to 467 (QKRIGSTMQV…EYDLWGSILH (67 aa)) is the TRAM domain.

It belongs to the methylthiotransferase family. RimO subfamily. [4Fe-4S] cluster is required as a cofactor.

Its subcellular location is the cytoplasm. It carries out the reaction L-aspartate(89)-[ribosomal protein uS12]-hydrogen + (sulfur carrier)-SH + AH2 + 2 S-adenosyl-L-methionine = 3-methylsulfanyl-L-aspartate(89)-[ribosomal protein uS12]-hydrogen + (sulfur carrier)-H + 5'-deoxyadenosine + L-methionine + A + S-adenosyl-L-homocysteine + 2 H(+). In terms of biological role, catalyzes the methylthiolation of an aspartic acid residue of ribosomal protein uS12. This Vibrio cholerae serotype O1 (strain ATCC 39315 / El Tor Inaba N16961) protein is Ribosomal protein uS12 methylthiotransferase RimO.